Reading from the N-terminus, the 632-residue chain is Polygalacturonase non-catalytic subunit AroGP3 (632 aa).

An N-terminal signal peptide occupies residues 1–27 (MHTKILLPSCILLLLLFTLSSLDVVVA). The propeptide occupies 28–109 (KDGDESGNPF…MCALDLLPSL (82 aa)). 7 N-linked (GlcNAc...) asparagine glycosylation sites follow: asparagine 125, asparagine 143, asparagine 258, asparagine 280, asparagine 336, asparagine 371, and asparagine 389. Residues 417–631 (FFREKMLKSG…FENDMTWATA (215 aa)) enclose the BURP domain.

As to quaternary structure, interacts with polygalacturonase to form heterodimers.

The protein resides in the secreted. Its subcellular location is the extracellular space. It is found in the apoplast. The protein localises to the cell wall. Non-catalytic subunit of polygalacturonase. The sequence is that of Polygalacturonase non-catalytic subunit AroGP3 (GP3) from Solanum lycopersicum (Tomato).